A 476-amino-acid polypeptide reads, in one-letter code: Protein transport protein Sec61 subunit alpha isoform 1 (476 aa).

The Cytoplasmic segment spans residues 2-28 (AIKFLEVIKPFCVILPEIQKPERKIQF). Residues 29–46 (KEKVLWTAITLFIFLVCC) form a helical membrane-spanning segment. The Lumenal portion of the chain corresponds to 47-80 (QIPLFGIMSSDSADPFYWMRVILASNRGTLMELG). Residues 81–97 (ISPIVTSGLIMQLLAGA) traverse the membrane as a helical segment. Over 98-109 (KIIEVGDTPKDR) the chain is Cytoplasmic. Residues 110 to 131 (ALFNGAQKLFGMIITIGQSIVY) form a helical membrane-spanning segment. Residues 132-148 (VMTGMYGDPSEMGAGIC) lie on the Lumenal side of the membrane. The chain crosses the membrane as a helical span at residues 149–167 (LLITIQLFVAGLIVLLLDE). The Cytoplasmic segment spans residues 168–177 (LLQKGYGLGS). A helical membrane pass occupies residues 178–196 (GISLFIATNICETIVWKAF). At 197–241 (SPTTVNTGRGMEFEGAIIALFHLLATRTDKVRALREAFYRQNLPN) the chain is on the lumenal side. The helical transmembrane segment at 242-259 (LMNLIATIFVFAVVIYFQ) threads the bilayer. At 260–285 (GFRVDLPIKSARYRGQYNTYPIKLFY) the chain is on the cytoplasmic side. A helical transmembrane segment spans residues 286-306 (TSNIPIILQSALVSNLYVISQ). The Lumenal segment spans residues 307–356 (MLSARFSGNLLVSLLGTWSDTSSGGPARAYPVGGLCHYLSPPESFGSVLE). The chain crosses the membrane as a helical span at residues 357 to 379 (DPVHAVVYIVFMLGSCAFFSKTW). The Cytoplasmic portion of the chain corresponds to 380 to 420 (IEVSGSSAKDVAKQLKEQQMVMRGHRETSMVHELNRYIPTA). A helical membrane pass occupies residues 421-437 (AAFGGLCIGALSVLADF). The Lumenal portion of the chain corresponds to 438 to 443 (LGAIGS). Residues 444–458 (GTGILLAVTIIYQYF) form a helical membrane-spanning segment. Residues 459 to 476 (EIFVKEQSEVGSMGALLF) lie on the Cytoplasmic side of the membrane.

It belongs to the SecY/SEC61-alpha family. As to quaternary structure, the SEC61 channel-forming translocon complex consists of channel-forming core components SEC61A1, SEC61B and SEC61G and different auxiliary components such as SEC62 and SEC63. The SEC61 channel associates with the multi-pass translocon (MPT) complex.

Its subcellular location is the endoplasmic reticulum membrane. Its function is as follows. Component of SEC61 channel-forming translocon complex that mediates transport of signal peptide-containing precursor polypeptides across the endoplasmic reticulum (ER). Forms a ribosome receptor and a gated pore in the ER membrane, both functions required for cotranslational translocation of nascent polypeptides. May cooperate with auxiliary protein SEC62, SEC63 and HSPA5/BiP to enable post-translational transport of small presecretory proteins. The SEC61 channel is also involved in ER membrane insertion of transmembrane proteins: it mediates membrane insertion of the first few transmembrane segments of proteins, while insertion of subsequent transmembrane regions of multi-pass membrane proteins is mediated by the multi-pass translocon (MPT) complex. The SEC61 channel cooperates with the translocating protein TRAM1 to import nascent proteins into the ER. Controls the passive efflux of calcium ions from the ER lumen to the cytosol through SEC61 channel, contributing to the maintenance of cellular calcium homeostasis. Plays a critical role in nephrogenesis, specifically at pronephros stage. This Canis lupus familiaris (Dog) protein is Protein transport protein Sec61 subunit alpha isoform 1 (SEC61A1).